A 1126-amino-acid chain; its full sequence is DNA-directed RNA polymerase subunit Rpo2 (1126 aa).

Zn(2+) contacts are provided by Cys-1060, Cys-1063, Cys-1078, and His-1081.

It belongs to the RNA polymerase beta chain family. As to quaternary structure, part of the 13-subunit RNA polymerase complex. Interacts with TFS4. In terms of assembly, (Microbial infection) Binds viral protein RIP which blocks global transcription. The cofactor is Zn(2+).

The protein resides in the cytoplasm. The catalysed reaction is RNA(n) + a ribonucleoside 5'-triphosphate = RNA(n+1) + diphosphate. DNA-dependent RNA polymerase (RNAP) catalyzes the transcription of DNA into RNA using the four ribonucleoside triphosphates as substrates. This subunit is involved in DNA promoter recognition. The protein is DNA-directed RNA polymerase subunit Rpo2 of Sulfolobus acidocaldarius (strain ATCC 33909 / DSM 639 / JCM 8929 / NBRC 15157 / NCIMB 11770).